We begin with the raw amino-acid sequence, 170 residues long: uncharacterized protein (170 aa).

A signal peptide spans 1-28; sequence MTGGVMSQKFVVGAGLLVCSVCSLSAMA.

It belongs to the fimbrial protein family.

Part of the yfcOPQRSUV fimbrial operon. Could contribute to adhesion to various surfaces in specific environmental niches. Increases adhesion to eukaryotic T24 bladder epithelial cells in the absence of fim genes. This is an uncharacterized protein from Escherichia coli (strain K12).